The following is a 356-amino-acid chain: MTAPVRIALDAMGGDHGPETVLAGAEISLWRHPDTSFVLYGDEARVTEVLKSHPKLAAVSRIVHTDVVVGMDDKPSQALRRGRYKSSMWRAIDAVKLKEADVAVSAGNTGALMAMANFNLRTMPGISRPAIAAIWPTLRGESVVLDVGASIGATAKSLVEMAIMGSAMARVLFDLEAPTVGLLNVGVEEIKGVEEVKEAARILREENLDVNYRGFVEGNDIGAGTVDVVVTEGFSGNIALKTAEGTAKQLGSYLRAAMGRTWRARIGYLLARDAFRVLREKMDPRRANGGVFLGLNGIVIKSHGGTDAEGFAAAVDLAYDMVRNELLARIEKSLVGRQPPDVAACRPQAAGVEGQS.

It belongs to the PlsX family. In terms of assembly, homodimer. Probably interacts with PlsY.

It is found in the cytoplasm. The enzyme catalyses a fatty acyl-[ACP] + phosphate = an acyl phosphate + holo-[ACP]. Its pathway is lipid metabolism; phospholipid metabolism. In terms of biological role, catalyzes the reversible formation of acyl-phosphate (acyl-PO(4)) from acyl-[acyl-carrier-protein] (acyl-ACP). This enzyme utilizes acyl-ACP as fatty acyl donor, but not acyl-CoA. The polypeptide is Phosphate acyltransferase (Xanthobacter autotrophicus (strain ATCC BAA-1158 / Py2)).